The chain runs to 183 residues: Adenine phosphoribosyltransferase (183 aa).

Belongs to the purine/pyrimidine phosphoribosyltransferase family. In terms of assembly, homodimer.

It localises to the cytoplasm. It catalyses the reaction AMP + diphosphate = 5-phospho-alpha-D-ribose 1-diphosphate + adenine. Its pathway is purine metabolism; AMP biosynthesis via salvage pathway; AMP from adenine: step 1/1. Functionally, catalyzes a salvage reaction resulting in the formation of AMP, that is energically less costly than de novo synthesis. This Salmonella arizonae (strain ATCC BAA-731 / CDC346-86 / RSK2980) protein is Adenine phosphoribosyltransferase.